The chain runs to 497 residues: FAD-linked oxidoreductase fmqD (497 aa).

The signal sequence occupies residues 1 to 17; sequence MQYIPFLISGLVPVALS. The FAD-binding PCMH-type domain maps to 68–243; that stretch reads NDPSYVATVK…TSATYRIYDQ (176 aa). Residues N99, N261, and N288 are each glycosylated (N-linked (GlcNAc...) asparagine).

This sequence belongs to the oxygen-dependent FAD-linked oxidoreductase family.

It is found in the secreted. The protein localises to the cell wall. The protein operates within alkaloid biosynthesis. FAD-linked oxidoreductase; part of the gene cluster that mediates the biosynthesis of the antitumor fumiquinazolines that confer a dual-usage capability to defend against phagocytes in the environment and animal hosts. The simplest member is fumiquinazoline F (FQF) with a 6-6-6 tricyclic core derived from anthranilic acid (Ant), tryptophan (Trp), and alanine (Ala). The trimodular NRPS fmqA is responsible for FQF formation. Modules 1, 2 and 3 of fmqA are predicted to activate and load Ant, Trp and Ala, respectively, providing for the assembly of an Ant-Trp-Ala-S-enzyme intermediate that would undergo double cyclization for chain release and generation of the tricyclic 6-6-6 product fumiquinazoline F. The presence of an E domain predicted for module 2 of fmqA is consistent with epimerization of L-Trp to D-Trp during assembly to generate the R-stereocenter at C14 of FQF. The FAD-dependent monooxygenase fmqB and the monomodular NRPS fmqC then maturate FQF to FQA. FmqB oxidizes the 2',3'-double bond of the indole side chain of FQF, and fmqC activates L-Ala as the adenylate, installs it as the pantetheinyl thioester on its carrier protein domain, and acylates the oxidized indole for subsequent intramolecular cyclization to create the 6-5-5-imidazolindolone of FQA. The FAD-linked oxidoreductase fmqD introduces a third layer of scaffold complexity by converting FQA to the spirohemiaminal FQC, presumably by catalyzing the formation of a transient imine within the pyrazinone ring. FQC subsequently converts nonenzymatically to the known cyclic aminal FQD. In Aspergillus fumigatus (strain ATCC MYA-4609 / CBS 101355 / FGSC A1100 / Af293) (Neosartorya fumigata), this protein is FAD-linked oxidoreductase fmqD.